Consider the following 1045-residue polypeptide: Translation initiation factor IF-2 (1045 aa).

2 disordered regions span residues 1-169 and 184-451; these read MSDE…AQAP and QAPA…RGGP. Residues 83 to 94 show a composition bias toward gly residues; that stretch reads SGGGGSSAGGLS. Residues 103–123 show a composition bias toward basic and acidic residues; that stretch reads RAIEAAREHQERQAAERRAAE. Residues 124-151 show a composition bias toward low complexity; the sequence is ARAASEAAAARDAAAKSAAAAKAAAAPA. Positions 152–163 are enriched in pro residues; that stretch reads PEAPAAPAPTPA. The segment covering 184 to 199 has biased composition (low complexity); the sequence is QAPAAPVAAAPAAPRA. Basic and acidic residues-rich tracts occupy residues 227 to 237 and 302 to 323; these read EPSRDRRDDRS and RNDRPQGDRPQGDRPQGDRPQG. A compositionally biased stretch (pro residues) spans 338-348; the sequence is RPAPGARPGPG. Positions 352 to 363 are enriched in low complexity; that stretch reads GARPGVPASAPA. Basic and acidic residues-rich tracts occupy residues 381-393 and 438-450; these read VGRKPEEDDDRRK and RAREREKEKRRGG. A tr-type G domain is found at 540 to 710; the sequence is PRPPVVTVMG…LLLAEVMDLK (171 aa). Residues 549 to 556 form a G1 region; the sequence is GHVDHGKT. 549–556 contributes to the GTP binding site; the sequence is GHVDHGKT. Positions 574–578 are G2; the sequence is GITQH. The tract at residues 596–599 is G3; that stretch reads DTPG. GTP contacts are provided by residues 596–600 and 650–653; these read DTPGH and NKMD. Residues 650–653 form a G4 region; that stretch reads NKMD. The segment at 686–688 is G5; that stretch reads SAK.

This sequence belongs to the TRAFAC class translation factor GTPase superfamily. Classic translation factor GTPase family. IF-2 subfamily.

The protein resides in the cytoplasm. Its function is as follows. One of the essential components for the initiation of protein synthesis. Protects formylmethionyl-tRNA from spontaneous hydrolysis and promotes its binding to the 30S ribosomal subunits. Also involved in the hydrolysis of GTP during the formation of the 70S ribosomal complex. The protein is Translation initiation factor IF-2 of Caulobacter sp. (strain K31).